Consider the following 354-residue polypeptide: UDP-3-O-acylglucosamine N-acyltransferase (354 aa).

The active-site Proton acceptor is His-247.

This sequence belongs to the transferase hexapeptide repeat family. LpxD subfamily. In terms of assembly, homotrimer.

It catalyses the reaction a UDP-3-O-[(3R)-3-hydroxyacyl]-alpha-D-glucosamine + a (3R)-hydroxyacyl-[ACP] = a UDP-2-N,3-O-bis[(3R)-3-hydroxyacyl]-alpha-D-glucosamine + holo-[ACP] + H(+). The protein operates within bacterial outer membrane biogenesis; LPS lipid A biosynthesis. Functionally, catalyzes the N-acylation of UDP-3-O-acylglucosamine using 3-hydroxyacyl-ACP as the acyl donor. Is involved in the biosynthesis of lipid A, a phosphorylated glycolipid that anchors the lipopolysaccharide to the outer membrane of the cell. This Chlamydia trachomatis serovar L2 (strain ATCC VR-902B / DSM 19102 / 434/Bu) protein is UDP-3-O-acylglucosamine N-acyltransferase.